The following is an 803-amino-acid chain: Exo-1,4-beta-xylosidase xlnD (803 aa).

Positions 1-18 (MRSLISVAVLSALPTAFS) are cleaved as a signal peptide. N-linked (GlcNAc...) asparagine glycosylation is found at Asn-21, Asn-44, Asn-85, Asn-122, Asn-140, and Asn-234. Asp-307 is a catalytic residue. N-linked (GlcNAc...) asparagine glycosylation is found at Asn-437, Asn-474, Asn-515, Asn-611, Asn-676, and Asn-698.

It belongs to the glycosyl hydrolase 3 family.

The protein resides in the secreted. The catalysed reaction is Hydrolysis of (1-&gt;4)-beta-D-xylans, to remove successive D-xylose residues from the non-reducing termini.. The protein operates within glycan degradation; xylan degradation. Xylan 1,4-beta-xylosidase involved in the hydrolysis of xylan, a major structural heterogeneous polysaccharide found in plant biomass representing the second most abundant polysaccharide in the biosphere, after cellulose. This chain is Exo-1,4-beta-xylosidase xlnD (xlnD), found in Emericella nidulans (strain FGSC A4 / ATCC 38163 / CBS 112.46 / NRRL 194 / M139) (Aspergillus nidulans).